A 185-amino-acid polypeptide reads, in one-letter code: Threonylcarbamoyl-AMP synthase (185 aa).

In terms of domain architecture, YrdC-like spans serine 4–glycine 185.

This sequence belongs to the SUA5 family. TsaC subfamily.

It localises to the cytoplasm. The enzyme catalyses L-threonine + hydrogencarbonate + ATP = L-threonylcarbamoyladenylate + diphosphate + H2O. Required for the formation of a threonylcarbamoyl group on adenosine at position 37 (t(6)A37) in tRNAs that read codons beginning with adenine. Catalyzes the conversion of L-threonine, HCO(3)(-)/CO(2) and ATP to give threonylcarbamoyl-AMP (TC-AMP) as the acyladenylate intermediate, with the release of diphosphate. In Pseudomonas putida (strain GB-1), this protein is Threonylcarbamoyl-AMP synthase.